Here is a 763-residue protein sequence, read N- to C-terminus: Phosphoglycerol transferase I (763 aa).

The next 4 membrane-spanning stretches (helical) occupy residues 4–19 (LLSFALFLASVLIYAW), 26–48 (WWFAATLTVLGLFVVLNITLFAS), 76–98 (YILPGIGIVLGLAAVFGALGWIL), and 105–127 (PHHFGYSLLALLLALGSVDASPA).

Belongs to the OpgB family.

The protein resides in the cell inner membrane. It catalyses the reaction a phosphatidylglycerol + a membrane-derived-oligosaccharide D-glucose = a 1,2-diacyl-sn-glycerol + a membrane-derived-oligosaccharide 6-(glycerophospho)-D-glucose.. The protein operates within glycan metabolism; osmoregulated periplasmic glucan (OPG) biosynthesis. Functionally, transfers a phosphoglycerol residue from phosphatidylglycerol to the membrane-bound nascent glucan backbones. The protein is Phosphoglycerol transferase I of Escherichia coli O6:H1 (strain CFT073 / ATCC 700928 / UPEC).